A 321-amino-acid chain; its full sequence is MIKLLYPEFWQKRNIIAYLLLPISVIYKFLGYLRASLARPIMLPAKVICVGNCSVGGTGKTQIVMYLAKLLKSRNVSFVIVTKAYGSNLKSATTIHQGHTALEVGDEGVILAKYGAVIATKNIKEIVPLLNELKPDIIIVDDFLQNPYFHKDFTIVSVDSQRLFGNGFLIPAGPLRQYPNKALDAADLIFLVSSHQDKIPNILTPYVNKLINAQIVPSNNIDKTKNYFAFSGIGNPERFFATLKNYGLNITGYKIFPDHYNYLQADLENLYSLAKEHNATLVTTRKDHVKFNDLNNNIVCLDVELSINHPDLLNEKIFKKA.

An ATP-binding site is contributed by 54–61; the sequence is SVGGTGKT.

This sequence belongs to the LpxK family.

The catalysed reaction is a lipid A disaccharide + ATP = a lipid IVA + ADP + H(+). It participates in glycolipid biosynthesis; lipid IV(A) biosynthesis; lipid IV(A) from (3R)-3-hydroxytetradecanoyl-[acyl-carrier-protein] and UDP-N-acetyl-alpha-D-glucosamine: step 6/6. Its function is as follows. Transfers the gamma-phosphate of ATP to the 4'-position of a tetraacyldisaccharide 1-phosphate intermediate (termed DS-1-P) to form tetraacyldisaccharide 1,4'-bis-phosphate (lipid IVA). This is Tetraacyldisaccharide 4'-kinase from Rickettsia conorii (strain ATCC VR-613 / Malish 7).